A 439-amino-acid polypeptide reads, in one-letter code: Glutamate--tRNA ligase 1 (439 aa).

The short motif at 6–16 (PSPTGDMHIGN) is the 'HIGH' region element. Positions 232–236 (KMSKR) match the 'KMSKS' region motif. K235 is an ATP binding site.

This sequence belongs to the class-I aminoacyl-tRNA synthetase family. Glutamate--tRNA ligase type 1 subfamily. Monomer.

The protein resides in the cytoplasm. It carries out the reaction tRNA(Glu) + L-glutamate + ATP = L-glutamyl-tRNA(Glu) + AMP + diphosphate. In terms of biological role, catalyzes the attachment of glutamate to tRNA(Glu) in a two-step reaction: glutamate is first activated by ATP to form Glu-AMP and then transferred to the acceptor end of tRNA(Glu). The polypeptide is Glutamate--tRNA ligase 1 (Helicobacter acinonychis (strain Sheeba)).